Here is a 484-residue protein sequence, read N- to C-terminus: Deoxyribodipyrimidine photo-lyase (484 aa).

In terms of domain architecture, Photolyase/cryptochrome alpha/beta spans 3-132 (APILFWHRRD…RAVQLWDQLL (130 aa)). Coenzyme F420-(gamma-Glu)n contacts are provided by residues 36 to 38 (CLD), arginine 51, and 101 to 109 (DIEPYGRDR). Residues 141–148 (GSGNPYSV) form a DNA-binding region. Tyrosine 228 is a binding site for FAD. Arginine 232 contributes to the DNA binding site. FAD is bound at residue 240 to 247 (TSGLSPAL). Lysine 248 serves as a coordination point for coenzyme F420-(gamma-Glu)n. Interaction with DNA regions lie at residues 283–290 (ELAWREFY) and 349–350 (NR). Residues 346-352 (WMHNRCW), 380-382 (DGD), and asparagine 386 each bind FAD. 2 residues coordinate DNA: glutamine 411 and lysine 472.

It belongs to the DNA photolyase class-1 family. As to quaternary structure, monomer. It depends on FAD as a cofactor. Requires coenzyme F420-(gamma-Glu)n as cofactor.

It carries out the reaction cyclobutadipyrimidine (in DNA) = 2 pyrimidine residues (in DNA).. Functionally, involved in repair of UV radiation-induced DNA damage. Catalyzes the light-dependent monomerization (300-600 nm) of cyclobutyl pyrimidine dimers (in cis-syn configuration), which are formed between adjacent bases on the same DNA strand upon exposure to ultraviolet radiation. This is Deoxyribodipyrimidine photo-lyase (phr) from Synechococcus sp. (strain ATCC 27144 / PCC 6301 / SAUG 1402/1) (Anacystis nidulans).